Reading from the N-terminus, the 271-residue chain is Glutamate racemase (271 aa).

Substrate is bound by residues 13–14 (DS) and 45–46 (YG). Cys-77 functions as the Proton donor/acceptor in the catalytic mechanism. A substrate-binding site is contributed by 78–79 (NT). The active-site Proton donor/acceptor is the Cys-192. Position 193 to 194 (193 to 194 (TH)) interacts with substrate.

Belongs to the aspartate/glutamate racemases family.

It carries out the reaction L-glutamate = D-glutamate. It functions in the pathway cell wall biogenesis; peptidoglycan biosynthesis. Functionally, provides the (R)-glutamate required for cell wall biosynthesis. In Sinorhizobium medicae (strain WSM419) (Ensifer medicae), this protein is Glutamate racemase.